Here is a 95-residue protein sequence, read N- to C-terminus: Osteocalcin-related protein (95 aa).

A signal peptide spans 1-23; it reads MRTLSLLTLLALAALCLSDLTDA. Positions 24-49 are excised as a propeptide; it reads TPTGPESDKAFMSKQEGNKVVNRLRR. Positions 46–92 constitute a Gla domain; the sequence is RLRRYLGASVPSPDPLEPTRELCELDPACDELSNQYGLKTAYRRIYG. Glutamate 62, glutamate 66, glutamate 69, and aspartate 75 together coordinate Ca(2+). Residues glutamate 66 and glutamate 69 each carry the 4-carboxyglutamate modification. A disulfide bridge connects residues cysteine 68 and cysteine 74.

The protein belongs to the osteocalcin/matrix Gla protein family. Gamma-carboxyglutamic acid residues are formed by vitamin K dependent carboxylation. These residues are essential for the binding of calcium. Expressed in kidney and lung, but not in bone.

The protein localises to the secreted. Functionally, binds strongly to apatite and calcium. The protein is Osteocalcin-related protein of Mus musculus (Mouse).